The primary structure comprises 23 residues: MFKPGYSEAKKPKITDEFSYKQT.

During early embryogenesis expression is initially detected at the early cleavage stages in the nucleus of two discrete cells. Subsequently, expression is abundant in the cytoplasm of the newly formed pole cells. Male-specific expression during the third larval instar.

It localises to the cytoplasm. It is found in the nucleus. The polypeptide is Protein male-specific 40 (Drosophila melanogaster (Fruit fly)).